Here is a 565-residue protein sequence, read N- to C-terminus: Sulfite reductase [NADPH] hemoprotein beta-component (565 aa).

4 residues coordinate [4Fe-4S] cluster: Cys429, Cys435, Cys474, and Cys478. Cys478 is a siroheme binding site.

It belongs to the nitrite and sulfite reductase 4Fe-4S domain family. Alpha(8)-beta(8). The alpha component is a flavoprotein, the beta component is a hemoprotein. Requires siroheme as cofactor. It depends on [4Fe-4S] cluster as a cofactor.

The catalysed reaction is hydrogen sulfide + 3 NADP(+) + 3 H2O = sulfite + 3 NADPH + 4 H(+). Its pathway is sulfur metabolism; hydrogen sulfide biosynthesis; hydrogen sulfide from sulfite (NADPH route): step 1/1. Component of the sulfite reductase complex that catalyzes the 6-electron reduction of sulfite to sulfide. This is one of several activities required for the biosynthesis of L-cysteine from sulfate. In Shewanella oneidensis (strain ATCC 700550 / JCM 31522 / CIP 106686 / LMG 19005 / NCIMB 14063 / MR-1), this protein is Sulfite reductase [NADPH] hemoprotein beta-component.